Consider the following 458-residue polypeptide: SLIT-ROBO Rho GTPase-activating protein 2B (458 aa).

The F-BAR domain occupies 22–324 (KEIRAQLTEQ…AVENLDATSD (303 aa)). The segment covering 181 to 203 (LKEAEKQEEKQIGKSVKQEDRQT) has biased composition (basic and acidic residues). Residues 181 to 214 (LKEAEKQEEKQIGKSVKQEDRQTPRSPDSTANVR) form a disordered region. Positions 362–400 (QSELLQRCQQLQSRLSTLKIENEEVKKTMEATLQTIQDI) form a coiled coil.

May interact with SRGAP2; formation of the heterodimer alters SRGAP2 function.

May regulate cell migration and differentiation through interaction with and inhibition of SRGAP2. In contrast to SRGAP2C, it is not able to induce long-lasting changes in synaptic density throughout adulthood. The protein is SLIT-ROBO Rho GTPase-activating protein 2B (SRGAP2B) of Homo sapiens (Human).